The chain runs to 480 residues: Protein nucleotidyltransferase YdiU (480 aa).

The ATP site is built by glycine 86, glycine 88, arginine 89, lysine 109, aspartate 121, glycine 122, arginine 172, and arginine 179. Aspartate 248 functions as the Proton acceptor in the catalytic mechanism. Residues asparagine 249 and aspartate 258 each contribute to the Mg(2+) site. Aspartate 258 contributes to the ATP binding site.

Belongs to the SELO family. The cofactor is Mg(2+). Requires Mn(2+) as cofactor.

It carries out the reaction L-seryl-[protein] + ATP = 3-O-(5'-adenylyl)-L-seryl-[protein] + diphosphate. The enzyme catalyses L-threonyl-[protein] + ATP = 3-O-(5'-adenylyl)-L-threonyl-[protein] + diphosphate. It catalyses the reaction L-tyrosyl-[protein] + ATP = O-(5'-adenylyl)-L-tyrosyl-[protein] + diphosphate. The catalysed reaction is L-histidyl-[protein] + UTP = N(tele)-(5'-uridylyl)-L-histidyl-[protein] + diphosphate. It carries out the reaction L-seryl-[protein] + UTP = O-(5'-uridylyl)-L-seryl-[protein] + diphosphate. The enzyme catalyses L-tyrosyl-[protein] + UTP = O-(5'-uridylyl)-L-tyrosyl-[protein] + diphosphate. In terms of biological role, nucleotidyltransferase involved in the post-translational modification of proteins. It can catalyze the addition of adenosine monophosphate (AMP) or uridine monophosphate (UMP) to a protein, resulting in modifications known as AMPylation and UMPylation. This chain is Protein nucleotidyltransferase YdiU, found in Salmonella typhi.